Reading from the N-terminus, the 143-residue chain is NADH-quinone oxidoreductase subunit A (143 aa).

The next 3 helical transmembrane spans lie at 8–28 (FGNV…GYLT), 63–83 (FYVV…LFPW), and 93–113 (FALV…VYAW).

The protein belongs to the complex I subunit 3 family. In terms of assembly, NDH-1 is composed of 14 different subunits. Subunits NuoA, H, J, K, L, M, N constitute the membrane sector of the complex.

It is found in the cell inner membrane. The catalysed reaction is a quinone + NADH + 5 H(+)(in) = a quinol + NAD(+) + 4 H(+)(out). Functionally, NDH-1 shuttles electrons from NADH, via FMN and iron-sulfur (Fe-S) centers, to quinones in the respiratory chain. The immediate electron acceptor for the enzyme in this species is believed to be a menaquinone. Couples the redox reaction to proton translocation (for every two electrons transferred, four hydrogen ions are translocated across the cytoplasmic membrane), and thus conserves the redox energy in a proton gradient. This is NADH-quinone oxidoreductase subunit A from Chlorobium phaeovibrioides (strain DSM 265 / 1930) (Prosthecochloris vibrioformis (strain DSM 265)).